A 1836-amino-acid chain; its full sequence is U3 small nucleolar RNA-associated protein 10 (1836 aa).

The HEAT 1 repeat unit spans residues 245 to 283; sequence EVVGFLLLPSKYETLRNIDVDTRLTAYSIIAVLASIIPI. The interval 453–473 is disordered; sequence SNSSVRDSDDVEFDAGEEDNN. The span at 461-473 shows a compositional bias: acidic residues; it reads DDVEFDAGEEDNN. 2 HEAT repeats span residues 585–623 and 813–850; these read PLDL…TTTS and VENR…DQDL. Positions 863–883 are disordered; that stretch reads QIPEQGPAKRRRRSSSSTKQA. 2 consecutive transmembrane segments (helical) span residues 998–1018 and 1085–1105; these read LLLV…HSVM and LFTY…LLFL. HEAT repeat units lie at residues 1333 to 1372, 1749 to 1787, and 1790 to 1828; these read ESVL…KFGA, ETLV…KMGE, and LTYL…NVLG.

Belongs to the HEATR1/UTP10 family. In terms of assembly, component of the ribosomal small subunit (SSU) processome.

The protein localises to the nucleus. Its subcellular location is the nucleolus. It is found in the membrane. Functionally, involved in nucleolar processing of pre-18S ribosomal RNA. Involved in ribosome biosynthesis. This chain is U3 small nucleolar RNA-associated protein 10, found in Scheffersomyces stipitis (strain ATCC 58785 / CBS 6054 / NBRC 10063 / NRRL Y-11545) (Yeast).